Consider the following 61-residue polypeptide: Small ribosomal subunit protein uS14 (61 aa).

Zn(2+)-binding residues include cysteine 24, cysteine 27, cysteine 40, and cysteine 43.

Belongs to the universal ribosomal protein uS14 family. Zinc-binding uS14 subfamily. Part of the 30S ribosomal subunit. Contacts proteins S3 and S10. Zn(2+) serves as cofactor.

Functionally, binds 16S rRNA, required for the assembly of 30S particles and may also be responsible for determining the conformation of the 16S rRNA at the A site. This Anaeromyxobacter sp. (strain Fw109-5) protein is Small ribosomal subunit protein uS14.